The following is a 202-amino-acid chain: N-(5'-phosphoribosyl)anthranilate isomerase (202 aa).

Belongs to the TrpF family.

It carries out the reaction N-(5-phospho-beta-D-ribosyl)anthranilate = 1-(2-carboxyphenylamino)-1-deoxy-D-ribulose 5-phosphate. It functions in the pathway amino-acid biosynthesis; L-tryptophan biosynthesis; L-tryptophan from chorismate: step 3/5. The protein is N-(5'-phosphoribosyl)anthranilate isomerase of Bacillus cereus (strain ATCC 14579 / DSM 31 / CCUG 7414 / JCM 2152 / NBRC 15305 / NCIMB 9373 / NCTC 2599 / NRRL B-3711).